The sequence spans 576 residues: Sodium/hydrogen exchanger 8 (576 aa).

A run of 11 helical transmembrane segments spans residues 55 to 75, 79 to 99, 118 to 138, 151 to 171, 186 to 206, 256 to 276, 306 to 326, 349 to 369, 374 to 394, 412 to 432, and 446 to 466; these read MTIF…HLLI, LHFL…GAVI, PNMF…YSLH, LFAV…IYFL, FAFG…IFNA, LGYF…TGLI, GLAE…GIVM, VAFL…FSFP, ISFV…NIFP, MFIM…SLHL, and TTIV…MPLI. T505 carries the phosphothreonine modification. 2 positions are modified to phosphoserine: S566 and S568.

Belongs to the monovalent cation:proton antiporter 1 (CPA1) transporter (TC 2.A.36) family. Predominantly expressed in the liver, skeletal muscle, kidney, and testis. Expressed in both renal cortex and medulla. Detected throughout the entire gastrointestinal tract, with high expression detected in stomach, duodenum and ascending colon. In gastric epithelium; expressed in the glands within the fundus and pylorus regions.

It is found in the golgi apparatus membrane. The protein resides in the golgi apparatus. It localises to the trans-Golgi network membrane. Its subcellular location is the endosome. The protein localises to the multivesicular body membrane. It is found in the apical cell membrane. The protein resides in the cytoplasmic vesicle. It localises to the secretory vesicle. Its subcellular location is the acrosome. It catalyses the reaction Na(+)(in) + H(+)(out) = Na(+)(out) + H(+)(in). Functionally, na(+)/H(+) antiporter. Mediates the electoneutral exchange of intracellular H(+) ions for extracellular Na(+) in 1:1 stoichiometry. Acts as an Na(+)/H(+) exchanger in the trans-Golgi. Contributes to the regulation of pH regulation of Golgi apparatus, and consequently, in protein trafficking and endosomal morphology. Plays a crucial role in germ cells in acrosome biogenesis and sperm development, probably by playing a role in the fusion of the Golgi-derived vesicles that form the acrosomal cap. Can also be active at the cell surface of specialized cells. In the small intestine, plays a major physiological role in transepithelial absorption of Na(+). Regulates intracellular pH homeostasis of intestinal epithelial cells. Acts as an important regulator of mucosal integrity in the intestine and in the stomach, could mediate the pH fluctuation necessary for mucin exocytosis or assist membrane trafficking of other proteins. Plays a role in photoreceptor survival and in the maintenance of intracellular pH homeostasis in retinal pigment epithelium (RPE cells). The protein is Sodium/hydrogen exchanger 8 (Slc9a8) of Mus musculus (Mouse).